The chain runs to 450 residues: Bifunctional protein GlmU (450 aa).

A pyrophosphorylase region spans residues 1 to 229 (MRRHAIILAA…VEEIMGVNDR (229 aa)). Residues 8-11 (LAAG), Lys22, Gln72, and 77-78 (GT) contribute to the UDP-N-acetyl-alpha-D-glucosamine site. A Mg(2+)-binding site is contributed by Asp102. UDP-N-acetyl-alpha-D-glucosamine contacts are provided by Gly139, Glu154, and Asn227. A Mg(2+)-binding site is contributed by Asn227. The linker stretch occupies residues 230–250 (VMLSQAEKAMQRRTNHYHMLN). The interval 251-450 (GVTIIDPDST…RQTTKEGYRK (200 aa)) is N-acetyltransferase. UDP-N-acetyl-alpha-D-glucosamine is bound by residues Arg332 and Lys350. Catalysis depends on His362, which acts as the Proton acceptor. Residues Tyr365 and Asn376 each coordinate UDP-N-acetyl-alpha-D-glucosamine. Residues 385-386 (NY), Ala422, and Arg439 contribute to the acetyl-CoA site.

This sequence in the N-terminal section; belongs to the N-acetylglucosamine-1-phosphate uridyltransferase family. It in the C-terminal section; belongs to the transferase hexapeptide repeat family. In terms of assembly, homotrimer. Mg(2+) serves as cofactor.

It localises to the cytoplasm. It carries out the reaction alpha-D-glucosamine 1-phosphate + acetyl-CoA = N-acetyl-alpha-D-glucosamine 1-phosphate + CoA + H(+). It catalyses the reaction N-acetyl-alpha-D-glucosamine 1-phosphate + UTP + H(+) = UDP-N-acetyl-alpha-D-glucosamine + diphosphate. It functions in the pathway nucleotide-sugar biosynthesis; UDP-N-acetyl-alpha-D-glucosamine biosynthesis; N-acetyl-alpha-D-glucosamine 1-phosphate from alpha-D-glucosamine 6-phosphate (route II): step 2/2. The protein operates within nucleotide-sugar biosynthesis; UDP-N-acetyl-alpha-D-glucosamine biosynthesis; UDP-N-acetyl-alpha-D-glucosamine from N-acetyl-alpha-D-glucosamine 1-phosphate: step 1/1. Its pathway is bacterial outer membrane biogenesis; LPS lipid A biosynthesis. Its function is as follows. Catalyzes the last two sequential reactions in the de novo biosynthetic pathway for UDP-N-acetylglucosamine (UDP-GlcNAc). The C-terminal domain catalyzes the transfer of acetyl group from acetyl coenzyme A to glucosamine-1-phosphate (GlcN-1-P) to produce N-acetylglucosamine-1-phosphate (GlcNAc-1-P), which is converted into UDP-GlcNAc by the transfer of uridine 5-monophosphate (from uridine 5-triphosphate), a reaction catalyzed by the N-terminal domain. The chain is Bifunctional protein GlmU from Staphylococcus aureus (strain NCTC 8325 / PS 47).